We begin with the raw amino-acid sequence, 267 residues long: 4-hydroxy-tetrahydrodipicolinate reductase (267 aa).

Residues 8-13 (GAAGRM) and glutamate 34 contribute to the NAD(+) site. Arginine 35 is a binding site for NADP(+). NAD(+) contacts are provided by residues 98-100 (GST) and 122-125 (APNM). The active-site Proton donor/acceptor is the histidine 155. Histidine 156 is a (S)-2,3,4,5-tetrahydrodipicolinate binding site. Lysine 159 acts as the Proton donor in catalysis. 165–166 (GT) is a binding site for (S)-2,3,4,5-tetrahydrodipicolinate.

This sequence belongs to the DapB family.

It localises to the cytoplasm. It carries out the reaction (S)-2,3,4,5-tetrahydrodipicolinate + NAD(+) + H2O = (2S,4S)-4-hydroxy-2,3,4,5-tetrahydrodipicolinate + NADH + H(+). The enzyme catalyses (S)-2,3,4,5-tetrahydrodipicolinate + NADP(+) + H2O = (2S,4S)-4-hydroxy-2,3,4,5-tetrahydrodipicolinate + NADPH + H(+). The protein operates within amino-acid biosynthesis; L-lysine biosynthesis via DAP pathway; (S)-tetrahydrodipicolinate from L-aspartate: step 4/4. Its function is as follows. Catalyzes the conversion of 4-hydroxy-tetrahydrodipicolinate (HTPA) to tetrahydrodipicolinate. The chain is 4-hydroxy-tetrahydrodipicolinate reductase from Geotalea daltonii (strain DSM 22248 / JCM 15807 / FRC-32) (Geobacter daltonii).